Here is an 810-residue protein sequence, read N- to C-terminus: E3 ubiquitin-protein ligase RNF10 (810 aa).

The span at 1–31 (MPQSSPSAAATASDMDKNSGSSSSSASSGSS) shows a compositional bias: low complexity. The interval 1–119 (MPQSSPSAAA…SFNGGRRDEV (119 aa)) is disordered. Position 5 is a phosphoserine (Ser5). Polar residues predominate over residues 76–92 (NFINQSRRSNSQKSKTF). An interaction with MEOX2 region spans residues 101–185 (GGSSKLFSSS…FNKELFLQAN (85 aa)). The span at 104-113 (SKLFSSSFNG) shows a compositional bias: low complexity. Ser110 and Ser128 each carry phosphoserine. Residues 225–267 (CPICLYPPTAAKITRCGHIFCWACILHYLSLSEKTWSKCPICY) form an RING-type zinc finger. 4 disordered regions span residues 598 to 623 (KRKRQRQKKAREERRRERRIEMEENK), 652 to 674 (DSALGSTSTEGRGALSLSPLSRS), 722 to 759 (ADVWPKTAPKKDENTLGPPAPVDSDGESDNSDRVPVPS), and 775 to 810 (LDTPVTSDPLSEEKGGKKRKKQKQKLLFSTSVVHTK). The span at 607 to 623 (AREERRRERRIEMEENK) shows a compositional bias: basic and acidic residues. Residues 652-661 (DSALGSTSTE) show a composition bias toward polar residues. The span at 662–674 (GRGALSLSPLSRS) shows a compositional bias: low complexity. Positions 722–735 (ADVWPKTAPKKDEN) are enriched in basic and acidic residues. A compositionally biased stretch (polar residues) spans 801 to 810 (LFSTSVVHTK).

It belongs to the RNF10 family. Interacts with MEOX2.

Its subcellular location is the cytoplasm. The protein localises to the nucleus. It carries out the reaction S-ubiquitinyl-[E2 ubiquitin-conjugating enzyme]-L-cysteine + [acceptor protein]-L-lysine = [E2 ubiquitin-conjugating enzyme]-L-cysteine + N(6)-ubiquitinyl-[acceptor protein]-L-lysine.. It participates in protein modification; protein ubiquitination. Its function is as follows. E3 ubiquitin-protein ligase that catalyzes monoubiquitination of 40S ribosomal proteins RPS2/us5 and RPS3/us3 in response to ribosome stalling. Part of a ribosome quality control that takes place when ribosomes have stalled during translation initiation (iRQC): RNF10 acts by mediating monoubiquitination of RPS2/us5 and RPS3/us3, promoting their degradation by the proteasome. Also promotes ubiquitination of 40S ribosomal proteins in response to ribosome stalling during translation elongation. The action of RNF10 in iRQC is counteracted by USP10. May also act as a transcriptional factor involved in the regulation of MAG (Myelin-associated glycoprotein) expression. Acts as a regulator of Schwann cell differentiation and myelination. The polypeptide is E3 ubiquitin-protein ligase RNF10 (RNF10) (Bos taurus (Bovine)).